The following is a 219-amino-acid chain: GTP-binding protein drn-1 (219 aa).

GTP contacts are provided by residues 37–44 (GAGGVGKS), 56–62 (NENYVPT), 85–89 (DTTGS), 146–149 (NKKD), and 177–178 (AK). An Effector region motif is present at residues 59-67 (YVPTIEDTY). A Cysteine methyl ester modification is found at cysteine 216. Residue cysteine 216 is the site of S-geranylgeranyl cysteine attachment. Positions 217 to 219 (HIM) are cleaved as a propeptide — removed in mature form.

Belongs to the small GTPase superfamily. Di-Ras family. As to quaternary structure, interacts with epac-1 (via C-terminus). Expressed specifically in neurons including the nerve ring, ventral and dorsal nerve cord motor neurons and tail ganglia.

The protein localises to the cell membrane. Its function is as follows. Displays low GTPase activity and exists predominantly in the GTP-bound form. Together with epac-1, may regulate acetylcholine release at the neuromuscular junctions probably downstream of G-protein gsa-1 and adenylate cyclase acy-1. This chain is GTP-binding protein drn-1, found in Caenorhabditis elegans.